The primary structure comprises 845 residues: MSKLQQFPLSKGWSFRDNEATSEDAWMPVPVVPSVVHQDLQANNKLKDPYIGFNELEARWVNEKSWTYKTVFQKPAAPAGSCIVLAFDGLDTFAKVKLDGNVILENDNMFLARRVDVTKALEAEGDHVLEIDFDCAFLRAKELRKQDPRHNWASFNGDPSRLSVRKAQYHWGWDWGPVLMTAGIWREVRLEVYSARVADLWTEVQLASDHQSAQVTAFVEVESVHSGSHRACFTLSLHGQEITREEIGVTENGTAKATFDVKEPSLWWPHGYGDATLYEVSVSLVKEQEELHRVSKKFGIRTAEVIQRPDKHGKSFFFRVNGVDIFCGGSCWIPADNLLPSITAERYRKWIELMVHGRQVMIRVWGGGIYEDNSFYDACDELGVLVWQDFMFGCGNYPTWPNLLESIRKESVYNVRRLRHHPSIVIWVGNNEDYQVQEQAGLTYNYEDKDPENWLKTDFPARYIYEKLLPEVVQEYSPGTFYHPGSPWGDGKTTSDPTVGDMHQWNVWHGTQEKYQIFDTLGGRFNSEFGMEAFPHMSTIDYFVENEADKYPQSHVLDFHNKADGHERRIATYLVENLRTATDLETHIYLTQVVQAETMMFGYRGWRRQWGDERHCGGALLWQLNDCWPTISWAIVDYFLRPKPAFYAVARVLNPIAVGVRREHHDWSVTHAQPPKTSKFELWVASSRQQEIQGTVELRFLSVNTGLEVRERIVHENVSIVPNGTTNLIVDGLIDHTVHSEPHVLAARIWVDGQLVARDVDWPQPFKYLDLSDRGLEVKKISESEDEQTLLISTKKPVKCLVFEEREGVRISDSAMDIVPGDDQRVTIKGLKPGDAPLKYKFLGQ.

An N-linked (GlcNAc...) asparagine glycan is attached at N252. The active-site Proton donor is E432. N-linked (GlcNAc...) asparagine glycosylation is found at N717 and N723.

The protein belongs to the glycosyl hydrolase 2 family. Beta-mannosidase B subfamily.

It catalyses the reaction Hydrolysis of terminal, non-reducing beta-D-mannose residues in beta-D-mannosides.. Its pathway is glycan metabolism; N-glycan degradation. Exoglycosidase that cleaves the single beta-linked mannose residue from the non-reducing end of beta-mannosidic oligosaccharides of various complexity and length. Prefers mannobiose over mannotriose and has no activity against polymeric mannan. Is also severely restricted by galactosyl substitutions at the +1 subsite. The sequence is that of Beta-mannosidase B (mndB) from Aspergillus fumigatus (strain ATCC MYA-4609 / CBS 101355 / FGSC A1100 / Af293) (Neosartorya fumigata).